The chain runs to 572 residues: Proline--tRNA ligase (572 aa).

It belongs to the class-II aminoacyl-tRNA synthetase family. ProS type 1 subfamily. As to quaternary structure, homodimer.

The protein localises to the cytoplasm. It carries out the reaction tRNA(Pro) + L-proline + ATP = L-prolyl-tRNA(Pro) + AMP + diphosphate. Functionally, catalyzes the attachment of proline to tRNA(Pro) in a two-step reaction: proline is first activated by ATP to form Pro-AMP and then transferred to the acceptor end of tRNA(Pro). As ProRS can inadvertently accommodate and process non-cognate amino acids such as alanine and cysteine, to avoid such errors it has two additional distinct editing activities against alanine. One activity is designated as 'pretransfer' editing and involves the tRNA(Pro)-independent hydrolysis of activated Ala-AMP. The other activity is designated 'posttransfer' editing and involves deacylation of mischarged Ala-tRNA(Pro). The misacylated Cys-tRNA(Pro) is not edited by ProRS. The polypeptide is Proline--tRNA ligase (Enterobacter sp. (strain 638)).